A 327-amino-acid polypeptide reads, in one-letter code: Probable cell division protein WhiA (327 aa).

The H-T-H motif DNA-binding region spans 275-308 (SLEELGRLADPPMTKDAVAGRIRRLLSMADRKAK).

Belongs to the WhiA family.

Involved in cell division and chromosome segregation. In Mycobacterium avium (strain 104), this protein is Probable cell division protein WhiA.